The primary structure comprises 247 residues: tRNA pseudouridine synthase A (247 aa).

The active-site Nucleophile is the Asp52. Tyr113 lines the substrate pocket.

It belongs to the tRNA pseudouridine synthase TruA family. As to quaternary structure, homodimer.

The enzyme catalyses uridine(38/39/40) in tRNA = pseudouridine(38/39/40) in tRNA. In terms of biological role, formation of pseudouridine at positions 38, 39 and 40 in the anticodon stem and loop of transfer RNAs. The chain is tRNA pseudouridine synthase A from Bartonella quintana (strain Toulouse) (Rochalimaea quintana).